A 207-amino-acid chain; its full sequence is Large ribosomal subunit protein uL4 (207 aa).

It belongs to the universal ribosomal protein uL4 family. In terms of assembly, part of the 50S ribosomal subunit.

In terms of biological role, one of the primary rRNA binding proteins, this protein initially binds near the 5'-end of the 23S rRNA. It is important during the early stages of 50S assembly. It makes multiple contacts with different domains of the 23S rRNA in the assembled 50S subunit and ribosome. Forms part of the polypeptide exit tunnel. The chain is Large ribosomal subunit protein uL4 from Erythrobacter litoralis (strain HTCC2594).